We begin with the raw amino-acid sequence, 207 residues long: Basic helix-loop-helix transcription factor scleraxis (207 aa).

Disordered stretches follow at residues 1–91 (MSFA…RDRT) and 151–183 (AFFH…QPKQ). The span at 73-91 (PGREPRQRHTANARERDRT) shows a compositional bias: basic and acidic residues. Residues 78 to 130 (RQRHTANARERDRTNSVNTAFTALRTLIPTEPADRKLSKIETLRLASSYISHL) form the bHLH domain. Pro residues predominate over residues 161–171 (PLPPPPPPPPL).

As to quaternary structure, efficient DNA binding requires dimerization with another bHLH protein. Dimerizes and binds the E-box consensus sequence with E12. In terms of tissue distribution, expressed in mesenchymal precursors of cartilage and in connective tissue. Highly expressed in tendons in the limb, tongue and diaphragm and in cartilage of the bronchi.

Its subcellular location is the nucleus. Functionally, plays an early essential role in mesoderm formation, as well as a later role in formation of somite-derived chondrogenic lineages. In Mus musculus (Mouse), this protein is Basic helix-loop-helix transcription factor scleraxis (Scx).